Here is a 316-residue protein sequence, read N- to C-terminus: 4-hydroxy-3-methylbut-2-enyl diphosphate reductase (316 aa).

Cys-17 contacts [4Fe-4S] cluster. Residues His-46 and His-79 each contribute to the (2E)-4-hydroxy-3-methylbut-2-enyl diphosphate site. Positions 46 and 79 each coordinate dimethylallyl diphosphate. Residues His-46 and His-79 each coordinate isopentenyl diphosphate. Cys-101 provides a ligand contact to [4Fe-4S] cluster. Residue His-129 participates in (2E)-4-hydroxy-3-methylbut-2-enyl diphosphate binding. His-129 provides a ligand contact to dimethylallyl diphosphate. An isopentenyl diphosphate-binding site is contributed by His-129. Catalysis depends on Glu-131, which acts as the Proton donor. Thr-170 provides a ligand contact to (2E)-4-hydroxy-3-methylbut-2-enyl diphosphate. Cys-200 is a [4Fe-4S] cluster binding site. (2E)-4-hydroxy-3-methylbut-2-enyl diphosphate-binding residues include Ser-228, Ser-229, Asn-230, and Ser-273. Dimethylallyl diphosphate contacts are provided by Ser-228, Ser-229, Asn-230, and Ser-273. 4 residues coordinate isopentenyl diphosphate: Ser-228, Ser-229, Asn-230, and Ser-273.

This sequence belongs to the IspH family. [4Fe-4S] cluster is required as a cofactor.

The enzyme catalyses isopentenyl diphosphate + 2 oxidized [2Fe-2S]-[ferredoxin] + H2O = (2E)-4-hydroxy-3-methylbut-2-enyl diphosphate + 2 reduced [2Fe-2S]-[ferredoxin] + 2 H(+). The catalysed reaction is dimethylallyl diphosphate + 2 oxidized [2Fe-2S]-[ferredoxin] + H2O = (2E)-4-hydroxy-3-methylbut-2-enyl diphosphate + 2 reduced [2Fe-2S]-[ferredoxin] + 2 H(+). It functions in the pathway isoprenoid biosynthesis; dimethylallyl diphosphate biosynthesis; dimethylallyl diphosphate from (2E)-4-hydroxy-3-methylbutenyl diphosphate: step 1/1. The protein operates within isoprenoid biosynthesis; isopentenyl diphosphate biosynthesis via DXP pathway; isopentenyl diphosphate from 1-deoxy-D-xylulose 5-phosphate: step 6/6. Catalyzes the conversion of 1-hydroxy-2-methyl-2-(E)-butenyl 4-diphosphate (HMBPP) into a mixture of isopentenyl diphosphate (IPP) and dimethylallyl diphosphate (DMAPP). Acts in the terminal step of the DOXP/MEP pathway for isoprenoid precursor biosynthesis. This Roseobacter denitrificans (strain ATCC 33942 / OCh 114) (Erythrobacter sp. (strain OCh 114)) protein is 4-hydroxy-3-methylbut-2-enyl diphosphate reductase.